A 559-amino-acid polypeptide reads, in one-letter code: Dihydroxy-acid dehydratase (559 aa).

Cysteine 52 lines the [2Fe-2S] cluster pocket. Aspartate 84 serves as a coordination point for Mg(2+). Cysteine 125 contributes to the [2Fe-2S] cluster binding site. Mg(2+) contacts are provided by aspartate 126 and lysine 127. Lysine 127 carries the N6-carboxylysine modification. Cysteine 197 contacts [2Fe-2S] cluster. Glutamate 447 contributes to the Mg(2+) binding site. The active-site Proton acceptor is the serine 473.

This sequence belongs to the IlvD/Edd family. As to quaternary structure, homodimer. The cofactor is [2Fe-2S] cluster. It depends on Mg(2+) as a cofactor.

It carries out the reaction (2R)-2,3-dihydroxy-3-methylbutanoate = 3-methyl-2-oxobutanoate + H2O. The enzyme catalyses (2R,3R)-2,3-dihydroxy-3-methylpentanoate = (S)-3-methyl-2-oxopentanoate + H2O. It participates in amino-acid biosynthesis; L-isoleucine biosynthesis; L-isoleucine from 2-oxobutanoate: step 3/4. The protein operates within amino-acid biosynthesis; L-valine biosynthesis; L-valine from pyruvate: step 3/4. Functions in the biosynthesis of branched-chain amino acids. Catalyzes the dehydration of (2R,3R)-2,3-dihydroxy-3-methylpentanoate (2,3-dihydroxy-3-methylvalerate) into 2-oxo-3-methylpentanoate (2-oxo-3-methylvalerate) and of (2R)-2,3-dihydroxy-3-methylbutanoate (2,3-dihydroxyisovalerate) into 2-oxo-3-methylbutanoate (2-oxoisovalerate), the penultimate precursor to L-isoleucine and L-valine, respectively. The polypeptide is Dihydroxy-acid dehydratase (Roseiflexus sp. (strain RS-1)).